Reading from the N-terminus, the 303-residue chain is Protein SULFUR DEFICIENCY-INDUCED 2 (303 aa).

A coiled-coil region spans residues 62 to 89; that stretch reads RVDSALKDMALLMKQQNRAEEAIDAIQS. 4 TPR repeats span residues 64–97, 100–133, 160–193, and 195–226; these read DSAL…CSRQ, ESLD…IYQG, SRIL…EPDA, and KACN…ENKE. The stretch at 232–253 forms a coiled coil; sequence RLMARVQELLSELKPQEEEAAA.

This sequence belongs to the MS5 protein family.

Its subcellular location is the nucleus. Involved in the utilization of stored sulfate under sulfur-deficient conditions. The sequence is that of Protein SULFUR DEFICIENCY-INDUCED 2 from Arabidopsis thaliana (Mouse-ear cress).